Consider the following 44-residue polypeptide: MKRTYQPSKIVRKRRHGFRARMASKSGRAIINNRRRKGRHVLCA.

Belongs to the bacterial ribosomal protein bL34 family.

This Neorickettsia sennetsu (strain ATCC VR-367 / Miyayama) (Ehrlichia sennetsu) protein is Large ribosomal subunit protein bL34.